Consider the following 181-residue polypeptide: Crossover junction endodeoxyribonuclease RuvC (181 aa).

Residues Asp-7, Glu-67, and Asp-139 contribute to the active site. Mg(2+)-binding residues include Asp-7, Glu-67, and Asp-139.

It belongs to the RuvC family. Homodimer which binds Holliday junction (HJ) DNA. The HJ becomes 2-fold symmetrical on binding to RuvC with unstacked arms; it has a different conformation from HJ DNA in complex with RuvA. In the full resolvosome a probable DNA-RuvA(4)-RuvB(12)-RuvC(2) complex forms which resolves the HJ. Mg(2+) serves as cofactor.

Its subcellular location is the cytoplasm. It catalyses the reaction Endonucleolytic cleavage at a junction such as a reciprocal single-stranded crossover between two homologous DNA duplexes (Holliday junction).. In terms of biological role, the RuvA-RuvB-RuvC complex processes Holliday junction (HJ) DNA during genetic recombination and DNA repair. Endonuclease that resolves HJ intermediates. Cleaves cruciform DNA by making single-stranded nicks across the HJ at symmetrical positions within the homologous arms, yielding a 5'-phosphate and a 3'-hydroxyl group; requires a central core of homology in the junction. The consensus cleavage sequence is 5'-(A/T)TT(C/G)-3'. Cleavage occurs on the 3'-side of the TT dinucleotide at the point of strand exchange. HJ branch migration catalyzed by RuvA-RuvB allows RuvC to scan DNA until it finds its consensus sequence, where it cleaves and resolves the cruciform DNA. In Cupriavidus metallidurans (strain ATCC 43123 / DSM 2839 / NBRC 102507 / CH34) (Ralstonia metallidurans), this protein is Crossover junction endodeoxyribonuclease RuvC.